The following is a 391-amino-acid chain: UPF0229 protein CLH_2838 (391 aa).

2 disordered regions span residues 1-23 and 75-107; these read MAIF…DKRR and VATG…GNEE. The span at 80 to 92 shows a compositional bias: basic and acidic residues; the sequence is GEEKRGDKIESGS.

This sequence belongs to the UPF0229 family.

The protein is UPF0229 protein CLH_2838 of Clostridium botulinum (strain Alaska E43 / Type E3).